A 182-amino-acid chain; its full sequence is Vacuolar protein sorting-associated protein 29 (182 aa).

The residue at position 50 (lysine 50) is an N6-acetyllysine.

Belongs to the VPS29 family. In terms of assembly, component of the commander complex consisting of the CCC subcomplex and the retriever subcomplex. Component of the heterotrimeric retriever complex formed by VPS26C, VPS29 and VPS35L; within the complex interacts with VPS35L. Component of the heterotrimeric retromer cargo-selective complex (CSC), also described as vacuolar protein sorting subcomplex (VPS) formed by VPS26 (VPS26A or VPS26B), VPS29 and VPS35. The CSC has a highly elongated structure with VPS26 and VPS29 binding independently at opposite distal ends of VPS35 as central platform. The CSC is believed to associate with variable sorting nexins to form functionally distinct retromer complex variants. The originally described retromer complex (also called SNX-BAR retromer) is a pentamer containing the CSC and a heterodimeric membrane-deforming subcomplex formed between SNX1 or SNX2 and SNX5 or SNX6 (also called SNX-BAR subcomplex); the respective CSC and SNX-BAR subcomplexes associate with low affinity. The CSC associates with SNX3 to form a SNX3-retromer complex. The CSC associates with SNX27, the WASH complex and the SNX-BAR subcomplex to form the SNX27-retromer complex. Interacts with VPS26A, VPS35, SNX1, SNX2, SNX3, SNX27, WASHC5. Interacts with TBC1D5; this interaction is blocked by VPS35L in the retriever complex. Interacts with SNX17; the interaction is indirect; SNX17 (via its C-terminus) interacts with the retriever complex (via VPS26C and VPS35L). Interacts with VPS26B and ANKRD27.

The protein localises to the cytoplasm. It localises to the membrane. The protein resides in the endosome membrane. In terms of biological role, component of the commander complex that is essential for endosomal recycling of transmembrane cargos; the commander complex is composed of the CCC subcomplex and the retriever subcomplex. Component of the retriever complex, which is a heterotrimeric complex related to retromer cargo-selective complex (CSC) and essential for retromer-independent retrieval and recycling of numerous cargos such as integrin alpha-5/beta-1 (ITGA5:ITGB1). Component of the retromer cargo-selective complex (CSC). The CSC is believed to be the core functional component of retromer or respective retromer complex variants acting to prevent missorting of selected transmembrane cargo proteins into the lysosomal degradation pathway. The recruitment of the CSC to the endosomal membrane involves RAB7A and SNX3. The SNX-BAR retromer mediates retrograde transport of cargo proteins from endosomes to the trans-Golgi network (TGN) and is involved in endosome-to-plasma membrane transport for cargo protein recycling. The SNX3-retromer mediates the retrograde endosome-to-TGN transport of WLS distinct from the SNX-BAR retromer pathway. The SNX27-retromer is believed to be involved in endosome-to-plasma membrane trafficking and recycling of a broad spectrum of cargo proteins. The CSC seems to act as recruitment hub for other proteins, such as the WASH complex and TBC1D5. Required to regulate transcytosis of the polymeric immunoglobulin receptor (pIgR-pIgA). In the endosomes, retriever complex drives the retrieval and recycling of NxxY-motif-containing cargo proteins by coupling to SNX17, a cargo essential for the homeostatic maintenance of numerous cell surface proteins associated with processes that include cell migration, cell adhesion, nutrient supply and cell signaling. The recruitment of the retriever complex to the endosomal membrane involves CCC and WASH complexes. Involved in GLUT1 endosome-to-plasma membrane trafficking; the function is dependent of association with ANKRD27. The chain is Vacuolar protein sorting-associated protein 29 (Vps29) from Mus musculus (Mouse).